The chain runs to 116 residues: MNACVLSVLCLLGALAVLVEGVTVQDGDLSFPLESVKKLKGLREVQEPRLVSHKKFAPRLLQPVAPQLCSSHSALPEALRPVCEKPNAEEILQRLEAIAQDPNTCEICAYAACTGC.

The N-terminal stretch at 1 to 23 (MNACVLSVLCLLGALAVLVEGVT) is a signal peptide. The propeptide occupies 24 to 101 (VQDGDLSFPL…LQRLEAIAQD (78 aa)). 3 cysteine pairs are disulfide-bonded: C69–C83, C105–C113, and C108–C116.

This sequence belongs to the guanylin family. Localized in both crypts and villi in the small intestine and to superficial epithelial cells in the colon.

It localises to the secreted. Functionally, endogenous activator of intestinal guanylate cyclase. It stimulates this enzyme through the same receptor binding region as the heat-stable enterotoxins. The sequence is that of Guanylin (Guca2a) from Mus musculus (Mouse).